A 159-amino-acid chain; its full sequence is NAD(P)H-quinone oxidoreductase subunit J, chloroplastic (159 aa).

Belongs to the complex I 30 kDa subunit family. In terms of assembly, NDH is composed of at least 16 different subunits, 5 of which are encoded in the nucleus.

Its subcellular location is the plastid. The protein resides in the chloroplast thylakoid membrane. The enzyme catalyses a plastoquinone + NADH + (n+1) H(+)(in) = a plastoquinol + NAD(+) + n H(+)(out). The catalysed reaction is a plastoquinone + NADPH + (n+1) H(+)(in) = a plastoquinol + NADP(+) + n H(+)(out). Functionally, NDH shuttles electrons from NAD(P)H:plastoquinone, via FMN and iron-sulfur (Fe-S) centers, to quinones in the photosynthetic chain and possibly in a chloroplast respiratory chain. The immediate electron acceptor for the enzyme in this species is believed to be plastoquinone. Couples the redox reaction to proton translocation, and thus conserves the redox energy in a proton gradient. This chain is NAD(P)H-quinone oxidoreductase subunit J, chloroplastic, found in Triticum aestivum (Wheat).